A 162-amino-acid chain; its full sequence is uncharacterized protein (162 aa).

This is an uncharacterized protein from Picosynechococcus sp. (strain ATCC 27264 / PCC 7002 / PR-6) (Agmenellum quadruplicatum).